The sequence spans 358 residues: MATH domain and coiled-coil domain-containing protein At3g58440 (358 aa).

The region spanning 8–131 (QDKFTWVLEK…NDRLTIVAEV (124 aa)) is the MATH domain. Residues 250-309 (LRDAGFKVDWLEKKLDQLKEKKEEEMSGLARLHEIEERLQKLKLLFVDLESQLQKEKVEA) are a coiled coil.

This Arabidopsis thaliana (Mouse-ear cress) protein is MATH domain and coiled-coil domain-containing protein At3g58440.